Reading from the N-terminus, the 301-residue chain is NAD kinase 2 (301 aa).

Catalysis depends on Asp77, which acts as the Proton acceptor. NAD(+) is bound by residues 77–78 (DG), Arg82, 151–152 (NE), Arg162, Asp181, and 192–197 (TAYAFS).

It belongs to the NAD kinase family. It depends on a divalent metal cation as a cofactor.

The protein resides in the cytoplasm. The catalysed reaction is NAD(+) + ATP = ADP + NADP(+) + H(+). Its function is as follows. Involved in the regulation of the intracellular balance of NAD and NADP, and is a key enzyme in the biosynthesis of NADP. Catalyzes specifically the phosphorylation on 2'-hydroxyl of the adenosine moiety of NAD to yield NADP. This Streptomyces avermitilis (strain ATCC 31267 / DSM 46492 / JCM 5070 / NBRC 14893 / NCIMB 12804 / NRRL 8165 / MA-4680) protein is NAD kinase 2.